The chain runs to 161 residues: Nodulation protein N (161 aa).

The region spanning 9–133 (VPSRIGQELG…LVTTYEVTVE (125 aa)) is the MaoC-like domain.

It to the R.meliloti counterpart.

In terms of biological role, involved in the production of the root hair deformation (HAD) factor specifically on medicago. The sequence is that of Nodulation protein N (nodN) from Rhizobium leguminosarum bv. viciae.